The primary structure comprises 205 residues: NADH-quinone oxidoreductase subunit C (205 aa).

This sequence belongs to the complex I 30 kDa subunit family. In terms of assembly, NDH-1 is composed of 14 different subunits. Subunits NuoB, C, D, E, F, and G constitute the peripheral sector of the complex.

Its subcellular location is the cell inner membrane. It carries out the reaction a quinone + NADH + 5 H(+)(in) = a quinol + NAD(+) + 4 H(+)(out). Functionally, NDH-1 shuttles electrons from NADH, via FMN and iron-sulfur (Fe-S) centers, to quinones in the respiratory chain. The immediate electron acceptor for the enzyme in this species is believed to be ubiquinone. Couples the redox reaction to proton translocation (for every two electrons transferred, four hydrogen ions are translocated across the cytoplasmic membrane), and thus conserves the redox energy in a proton gradient. This Nitrosospira multiformis (strain ATCC 25196 / NCIMB 11849 / C 71) protein is NADH-quinone oxidoreductase subunit C.